Here is a 376-residue protein sequence, read N- to C-terminus: Enoyl-[acyl-carrier-protein] reductase, mitochondrial (376 aa).

The Proton donor role is filled by Tyr-72. Residues Asn-154, 182–185 (TSAV), 205–207 (RDR), 280–283 (YGGM), 305–307 (YWI), and Lys-369 each bind NADP(+).

This sequence belongs to the zinc-containing alcohol dehydrogenase family. Quinone oxidoreductase subfamily. In terms of assembly, homodimer.

It localises to the mitochondrion matrix. It catalyses the reaction a 2,3-saturated acyl-[ACP] + NADP(+) = a (2E)-enoyl-[ACP] + NADPH + H(+). Its function is as follows. Catalyzes the NADPH-dependent reduction of trans-2-enoyl thioesters in mitochondrial fatty acid synthesis (fatty acid synthesis type II). Fatty acid chain elongation in mitochondria uses acyl carrier protein (ACP) as an acyl group carrier, but the enzyme accepts both ACP and CoA thioesters as substrates in vitro. Required for respiration and the maintenance of the mitochondrial compartment. The chain is Enoyl-[acyl-carrier-protein] reductase, mitochondrial (ETR1) from Eremothecium gossypii (strain ATCC 10895 / CBS 109.51 / FGSC 9923 / NRRL Y-1056) (Yeast).